A 181-amino-acid chain; its full sequence is Protein GrpE (181 aa).

Polar residues predominate over residues 1 to 13 (MENTQENPATQSA). The interval 1-39 (MENTQENPATQSAEDIGSEKQAAQGAAPAAEAADAALAE) is disordered. A compositionally biased stretch (low complexity) spans 21–39 (QAAQGAAPAAEAADAALAE).

It belongs to the GrpE family. As to quaternary structure, homodimer.

Its subcellular location is the cytoplasm. Participates actively in the response to hyperosmotic and heat shock by preventing the aggregation of stress-denatured proteins, in association with DnaK and GrpE. It is the nucleotide exchange factor for DnaK and may function as a thermosensor. Unfolded proteins bind initially to DnaJ; upon interaction with the DnaJ-bound protein, DnaK hydrolyzes its bound ATP, resulting in the formation of a stable complex. GrpE releases ADP from DnaK; ATP binding to DnaK triggers the release of the substrate protein, thus completing the reaction cycle. Several rounds of ATP-dependent interactions between DnaJ, DnaK and GrpE are required for fully efficient folding. The protein is Protein GrpE of Burkholderia lata (strain ATCC 17760 / DSM 23089 / LMG 22485 / NCIMB 9086 / R18194 / 383).